Here is a 443-residue protein sequence, read N- to C-terminus: Putative rhamnogalacturonase D (443 aa).

An N-terminal signal peptide occupies residues 1-16 (MLVTSLIALLPAIAAA). Cys37 and Cys63 form a disulfide bridge. 4 N-linked (GlcNAc...) asparagine glycosylation sites follow: Asn47, Asn103, Asn124, and Asn152. The active-site Proton donor is the Asp215. A disulfide bridge links Cys217 with Cys234. N-linked (GlcNAc...) asparagine glycans are attached at residues Asn235, Asn250, Asn263, Asn276, and Asn281. Residues Cys338 and Cys344 are joined by a disulfide bond. Asn346 is a glycosylation site (N-linked (GlcNAc...) asparagine). Cysteines 366 and 375 form a disulfide. Asn380 carries N-linked (GlcNAc...) asparagine glycosylation.

The protein belongs to the glycosyl hydrolase 28 family.

The protein localises to the secreted. Functionally, pectinolytic enzymes consist of four classes of enzymes: pectine lyase, polygalacturonase, pectin methylesterase and rhamnogalacturonase. Hydrolyzes alpha-D-galacturonopyranosyl-(1,2)-alpha-L-rhamnopyranosyl linkages in the backbone of the hairy regions of pectins. In Aspergillus niger (strain ATCC MYA-4892 / CBS 513.88 / FGSC A1513), this protein is Putative rhamnogalacturonase D (rhgD).